The chain runs to 223 residues: Small ribosomal subunit protein uS3 (223 aa).

In terms of domain architecture, KH type-2 spans 39–107; sequence VREFLHKKLA…PVQINIEEVR (69 aa).

Belongs to the universal ribosomal protein uS3 family. Part of the 30S ribosomal subunit. Forms a tight complex with proteins S10 and S14.

Binds the lower part of the 30S subunit head. Binds mRNA in the 70S ribosome, positioning it for translation. The polypeptide is Small ribosomal subunit protein uS3 (Francisella tularensis subsp. mediasiatica (strain FSC147)).